We begin with the raw amino-acid sequence, 123 residues long: Late histone H2B.L3 (123 aa).

Low complexity predominate over residues 1-10; the sequence is MPAKAQAAGK. A disordered region spans residues 1-32; the sequence is MPAKAQAAGKKGSKKAKAPKPSGDKKRRRKRK. O-linked (GlcNAc) serine glycosylation is present at S110. K118 participates in a covalent cross-link: Glycyl lysine isopeptide (Lys-Gly) (interchain with G-Cter in ubiquitin).

Belongs to the histone H2B family. The nucleosome is a histone octamer containing two molecules each of H2A, H2B, H3 and H4 assembled in one H3-H4 heterotetramer and two H2A-H2B heterodimers. The octamer wraps approximately 147 bp of DNA. Post-translationally, monoubiquitination of Lys-118 gives a specific tag for epigenetic transcriptional activation and is also prerequisite for histone H3 'Lys-4' and 'Lys-79' methylation. GlcNAcylation at Ser-110 promotes monoubiquitination of Lys-118. It fluctuates in response to extracellular glucose, and associates with transcribed genes.

It localises to the nucleus. The protein resides in the chromosome. In terms of biological role, core component of nucleosome. Nucleosomes wrap and compact DNA into chromatin, limiting DNA accessibility to the cellular machineries which require DNA as a template. Histones thereby play a central role in transcription regulation, DNA repair, DNA replication and chromosomal stability. DNA accessibility is regulated via a complex set of post-translational modifications of histones, also called histone code, and nucleosome remodeling. The polypeptide is Late histone H2B.L3 (Strongylocentrotus purpuratus (Purple sea urchin)).